A 196-amino-acid chain; its full sequence is uncharacterized protein (196 aa).

Residues 26–46 traverse the membrane as a helical segment; that stretch reads ITFFFILLICFICILLLLAIF.

The protein localises to the membrane. This is an uncharacterized protein from Mus musculus (Mouse).